The primary structure comprises 297 residues: Aspartate carbamoyltransferase catalytic subunit (297 aa).

Carbamoyl phosphate contacts are provided by Arg49 and Thr50. Lys77 lines the L-aspartate pocket. Carbamoyl phosphate contacts are provided by Arg99, His129, and Gln132. Residues Arg162 and Arg215 each coordinate L-aspartate. Residues Gly256 and Pro257 each contribute to the carbamoyl phosphate site.

It belongs to the aspartate/ornithine carbamoyltransferase superfamily. ATCase family. Heterododecamer (2C3:3R2) of six catalytic PyrB chains organized as two trimers (C3), and six regulatory PyrI chains organized as three dimers (R2).

It carries out the reaction carbamoyl phosphate + L-aspartate = N-carbamoyl-L-aspartate + phosphate + H(+). Its pathway is pyrimidine metabolism; UMP biosynthesis via de novo pathway; (S)-dihydroorotate from bicarbonate: step 2/3. Its function is as follows. Catalyzes the condensation of carbamoyl phosphate and aspartate to form carbamoyl aspartate and inorganic phosphate, the committed step in the de novo pyrimidine nucleotide biosynthesis pathway. The protein is Aspartate carbamoyltransferase catalytic subunit of Legionella pneumophila subsp. pneumophila (strain Philadelphia 1 / ATCC 33152 / DSM 7513).